The primary structure comprises 235 residues: DUP240 protein DFP4 (235 aa).

The Cytoplasmic portion of the chain corresponds to 1–44 (MSSELLISNSKPRPEGLRKLCEGETVILPRDITPSKCAYFLKQN). Residues 45–65 (IVFISYIFIHIIITIILNRLA) traverse the membrane as a helical segment. Residues 66 to 72 (LSAHGNT) are Extracellular-facing. The chain crosses the membrane as a helical span at residues 73-93 (LIIILAALLITISLFLLLLLP). Over 94-235 (YLSCSRYKLR…DKYPEMGVTV (142 aa)) the chain is Cytoplasmic.

This sequence belongs to the DUP/COS family. As to quaternary structure, interacts according to large scale protein interaction studies with BZZ1, SRB4 and SUA7.

It is found in the cell membrane. The sequence is that of DUP240 protein DFP4 from Saccharomyces cerevisiae (strain ATCC 204508 / S288c) (Baker's yeast).